The primary structure comprises 571 residues: Proline--tRNA ligase (571 aa).

This sequence belongs to the class-II aminoacyl-tRNA synthetase family. ProS type 1 subfamily. As to quaternary structure, homodimer.

It localises to the cytoplasm. It carries out the reaction tRNA(Pro) + L-proline + ATP = L-prolyl-tRNA(Pro) + AMP + diphosphate. Catalyzes the attachment of proline to tRNA(Pro) in a two-step reaction: proline is first activated by ATP to form Pro-AMP and then transferred to the acceptor end of tRNA(Pro). As ProRS can inadvertently accommodate and process non-cognate amino acids such as alanine and cysteine, to avoid such errors it has two additional distinct editing activities against alanine. One activity is designated as 'pretransfer' editing and involves the tRNA(Pro)-independent hydrolysis of activated Ala-AMP. The other activity is designated 'posttransfer' editing and involves deacylation of mischarged Ala-tRNA(Pro). The misacylated Cys-tRNA(Pro) is not edited by ProRS. The sequence is that of Proline--tRNA ligase from Psychromonas ingrahamii (strain DSM 17664 / CCUG 51855 / 37).